A 1393-amino-acid chain; its full sequence is DNA-directed RNA polymerase subunit beta' (1393 aa).

Zn(2+)-binding residues include Cys-72, Cys-74, Cys-87, and Cys-90. Residues Asp-463, Asp-465, and Asp-467 each contribute to the Mg(2+) site. Residues Cys-812, Cys-887, Cys-894, and Cys-897 each contribute to the Zn(2+) site.

Belongs to the RNA polymerase beta' chain family. As to quaternary structure, the RNAP catalytic core consists of 2 alpha, 1 beta, 1 beta' and 1 omega subunit. When a sigma factor is associated with the core the holoenzyme is formed, which can initiate transcription. Mg(2+) is required as a cofactor. Zn(2+) serves as cofactor.

The catalysed reaction is RNA(n) + a ribonucleoside 5'-triphosphate = RNA(n+1) + diphosphate. Its function is as follows. DNA-dependent RNA polymerase catalyzes the transcription of DNA into RNA using the four ribonucleoside triphosphates as substrates. This Chlamydia abortus (strain DSM 27085 / S26/3) (Chlamydophila abortus) protein is DNA-directed RNA polymerase subunit beta'.